The primary structure comprises 142 residues: Large ribosomal subunit protein uL13 (142 aa).

The protein belongs to the universal ribosomal protein uL13 family. As to quaternary structure, part of the 50S ribosomal subunit.

In terms of biological role, this protein is one of the early assembly proteins of the 50S ribosomal subunit, although it is not seen to bind rRNA by itself. It is important during the early stages of 50S assembly. The polypeptide is Large ribosomal subunit protein uL13 (Ectopseudomonas mendocina (strain ymp) (Pseudomonas mendocina)).